The chain runs to 364 residues: Probable dual-specificity RNA methyltransferase RlmN (364 aa).

Glutamate 106 functions as the Proton acceptor in the catalytic mechanism. Positions 112–351 constitute a Radical SAM core domain; sequence YPHRNTVCIS…CTVRDTRGRE (240 aa). Cysteines 119 and 356 form a disulfide. 3 residues coordinate [4Fe-4S] cluster: cysteine 126, cysteine 130, and cysteine 133. Residues 177–178, serine 211, 234–236, and asparagine 313 each bind S-adenosyl-L-methionine; these read GE and SLH. The active-site S-methylcysteine intermediate is cysteine 356.

Belongs to the radical SAM superfamily. RlmN family. [4Fe-4S] cluster serves as cofactor.

Its subcellular location is the cytoplasm. The catalysed reaction is adenosine(2503) in 23S rRNA + 2 reduced [2Fe-2S]-[ferredoxin] + 2 S-adenosyl-L-methionine = 2-methyladenosine(2503) in 23S rRNA + 5'-deoxyadenosine + L-methionine + 2 oxidized [2Fe-2S]-[ferredoxin] + S-adenosyl-L-homocysteine. The enzyme catalyses adenosine(37) in tRNA + 2 reduced [2Fe-2S]-[ferredoxin] + 2 S-adenosyl-L-methionine = 2-methyladenosine(37) in tRNA + 5'-deoxyadenosine + L-methionine + 2 oxidized [2Fe-2S]-[ferredoxin] + S-adenosyl-L-homocysteine. Its function is as follows. Specifically methylates position 2 of adenine 2503 in 23S rRNA and position 2 of adenine 37 in tRNAs. This Mycolicibacterium paratuberculosis (strain ATCC BAA-968 / K-10) (Mycobacterium paratuberculosis) protein is Probable dual-specificity RNA methyltransferase RlmN.